We begin with the raw amino-acid sequence, 315 residues long: Bifunctional pinoresinol-lariciresinol reductase (315 aa).

NADP(+)-binding positions include 14-20, Arg-39, and Lys-48; that span reads GGTGYLG. Lys-142 (proton acceptor) is an active-site residue. Arg-146 contacts NADP(+). His-274 lines the substrate pocket.

This sequence belongs to the NmrA-type oxidoreductase family. Isoflavone reductase subfamily. As to quaternary structure, dimer.

The catalysed reaction is (+)-lariciresinol + NADP(+) = (+)-pinoresinol + NADPH + H(+). It catalyses the reaction (-)-secoisolariciresinol + NADP(+) = (+)-lariciresinol + NADPH + H(+). Functionally, reductase involved in lignan (-)-hinokinin biosynthesis. Catalyzes the enantioselective conversion of (+)-pinoresinol into (+)-lariciresinol and of (+)-lariciresinol into (-)-secoisolariciresinol. Abstracts the 4R-hydride from the NADPH cofactor during catalysis. Has also a low phenylcoumaran benzylic ether reductase activity. This Linum corymbulosum (Linum) protein is Bifunctional pinoresinol-lariciresinol reductase (PLR_Lc1).